The sequence spans 211 residues: Large ribosomal subunit protein bL25 (211 aa).

The interval glutamate 185 to lysine 211 is disordered. Residues alanine 199–lysine 211 are compositionally biased toward low complexity.

This sequence belongs to the bacterial ribosomal protein bL25 family. CTC subfamily. Part of the 50S ribosomal subunit; part of the 5S rRNA/L5/L18/L25 subcomplex. Contacts the 5S rRNA. Binds to the 5S rRNA independently of L5 and L18.

This is one of the proteins that binds to the 5S RNA in the ribosome where it forms part of the central protuberance. The chain is Large ribosomal subunit protein bL25 from Treponema denticola (strain ATCC 35405 / DSM 14222 / CIP 103919 / JCM 8153 / KCTC 15104).